The following is a 719-amino-acid chain: DNA replication licensing factor MCM7 (719 aa).

Ala-2 carries the post-translational modification N-acetylalanine. Residues Lys-15 and Lys-28 each participate in a glycyl lysine isopeptide (Lys-Gly) (interchain with G-Cter in SUMO2) cross-link. Ser-314 carries the phosphoserine modification. The 207-residue stretch at 332 to 538 (FYEKLAASIA…NDLRLAQHIT (207 aa)) folds into the MCM domain. Tyr-345 contacts ATP. Phosphoserine is present on Ser-365. Positions 384, 386, 387, 388, and 489 each coordinate ATP. Ser-500 carries the phosphoserine modification. The short motif at 513 to 516 (SRFD) is the Arginine finger element. Arg-514 is an ATP binding site. The tract at residues 521 to 564 (IQDRPDRDNDLRLAQHITYVHQHSRQPPAQFEPLDMKLMRRYIA) is interaction with RAD17. Residues 577–719 (LADYITAAYV…NTSRTRITFV (143 aa)) are interaction with ATRIP. An ATP-binding site is contributed by Arg-604. The residue at position 678 (Ser-678) is a Phosphoserine.

It belongs to the MCM family. In terms of assembly, component of the MCM2-7 complex. The complex forms a toroidal hexameric ring with the proposed subunit order MCM2-MCM6-MCM4-MCM7-MCM3-MCM5. Component of the CMG helicase complex, a hexameric ring of related MCM2-7 subunits stabilized by CDC45 and the tetrameric GINS complex. Interacts with the ATR-ATRIP complex and with RAD17. Interacts with TIPIN. Interacts with MCMBP. Interacts with ANKRD17. Component of the replisome complex composed of at least DONSON, MCM2, MCM7, PCNA and TICRR. O-glycosylated (O-GlcNAcylated), in a cell cycle-dependent manner. In terms of processing, ubiquitinated by ECS(LRR1) E3 ubiquitin-protein ligase complex when forks converge following formation of DNA interstrand cross-links. During mitosis, ubiquitinated by TRAIP when forks converge following formation of DNA interstrand cross-links. Short ubiquitin chains on MCM7 promote recruitment of DNA glycosylase NEIL3. If the interstrand cross-link cannot be cleaved by NEIL3, the ubiquitin chains continue to grow on MCM7, promoting the unloading of the CMG helicase complex by the VCP/p97 ATPase.

The protein localises to the nucleus. Its subcellular location is the chromosome. The catalysed reaction is ATP + H2O = ADP + phosphate + H(+). Acts as a component of the MCM2-7 complex (MCM complex) which is the replicative helicase essential for 'once per cell cycle' DNA replication initiation and elongation in eukaryotic cells. Core component of CDC45-MCM-GINS (CMG) helicase, the molecular machine that unwinds template DNA during replication, and around which the replisome is built. The active ATPase sites in the MCM2-7 ring are formed through the interaction surfaces of two neighboring subunits such that a critical structure of a conserved arginine finger motif is provided in trans relative to the ATP-binding site of the Walker A box of the adjacent subunit. The six ATPase active sites, however, are likely to contribute differentially to the complex helicase activity. Uncomplexed form does not show ATPase or DNA helicase. Required for S-phase checkpoint activation upon UV-induced damage. In Mus musculus (Mouse), this protein is DNA replication licensing factor MCM7 (Mcm7).